Here is a 96-residue protein sequence, read N- to C-terminus: Dynein light chain roadblock-type 1 (96 aa).

Ala2 is modified (N-acetylalanine).

It belongs to the GAMAD family. Homodimer. The cytoplasmic dynein 1 complex consists of two catalytic heavy chains (HCs) and a number of non-catalytic subunits presented by intermediate chains (ICs), light intermediate chains (LICs) and light chains (LCs); the composition seems to vary in respect to the IC, LIC and LC composition. The heavy chain homodimer serves as a scaffold for the probable homodimeric assembly of the respective non-catalytic subunits. The ICs and LICs bind directly to the HC dimer and the LCs assemble on the IC dimer. Interacts with DYNLRB2. Interacts with DYNC1I1 and DYNC1I2. Interacts with RAB6A isoform 1 (GTP-bound); the interaction is direct. Interacts with RAB6A isoform 2 (GDP-bound); the interaction is direct. Interacts with RAB6B (GDP-bound).

It localises to the cytoplasm. Its subcellular location is the cytoskeleton. Acts as one of several non-catalytic accessory components of the cytoplasmic dynein 1 complex that are thought to be involved in linking dynein to cargos and to adapter proteins that regulate dynein function. Cytoplasmic dynein 1 acts as a motor for the intracellular retrograde motility of vesicles and organelles along microtubules. The sequence is that of Dynein light chain roadblock-type 1 (Dynlrb1) from Mus musculus (Mouse).